The chain runs to 332 residues: MRHLLSAADLGRDEAVALLDTAETMADTQSRAIKKLPPLRGLTVVNLFFEDSTRTRISFEAAAKRLSADVINFSAKGSSVSKGESLKDTAQTLQAMGADAVVVRHWASGAPHRLAHAGWIAAPVINAGDGTHQHPTQALLDAFTLRRRLAGPDGPIGTDLAGRHVVVVGDVLHSRVARSNVDLLSTLGARVTLVAPPTLLPVGVESWPCEVGYDLDAAIDAGPDAVMMLRVQRERMSSGFFPSEREYARAYGLDAARVSRLGKHALVMHPGPMNRGLEISADAADSARSTVVEQVTNGVSVRMAVLYTLLAGGPDGDSTTSPGSGPEGGTTP.

Carbamoyl phosphate is bound by residues arginine 54 and threonine 55. Lysine 82 is an L-aspartate binding site. Carbamoyl phosphate-binding residues include arginine 104, histidine 134, and glutamine 137. L-aspartate-binding residues include arginine 175 and arginine 230. Residues glycine 271 and proline 272 each coordinate carbamoyl phosphate. The disordered stretch occupies residues 312–332; that stretch reads GGPDGDSTTSPGSGPEGGTTP.

The protein belongs to the aspartate/ornithine carbamoyltransferase superfamily. ATCase family. In terms of assembly, heterododecamer (2C3:3R2) of six catalytic PyrB chains organized as two trimers (C3), and six regulatory PyrI chains organized as three dimers (R2).

The catalysed reaction is carbamoyl phosphate + L-aspartate = N-carbamoyl-L-aspartate + phosphate + H(+). It participates in pyrimidine metabolism; UMP biosynthesis via de novo pathway; (S)-dihydroorotate from bicarbonate: step 2/3. Functionally, catalyzes the condensation of carbamoyl phosphate and aspartate to form carbamoyl aspartate and inorganic phosphate, the committed step in the de novo pyrimidine nucleotide biosynthesis pathway. The chain is Aspartate carbamoyltransferase catalytic subunit from Beutenbergia cavernae (strain ATCC BAA-8 / DSM 12333 / CCUG 43141 / JCM 11478 / NBRC 16432 / NCIMB 13614 / HKI 0122).